The sequence spans 347 residues: uncharacterized protein (347 aa).

Coiled coils occupy residues 148–201 (DQQS…EKDG) and 261–298 (LENLTFRLNLINDLNKKEEEKEKEKEKEKEENSFDTFS). The segment at 151 to 203 (SISNLRKEEKEKQKENENENENENENENENEKENQELDKKVNQTNDNEKDGDE) is disordered. The segment covering 155-167 (LRKEEKEKQKENE) has biased composition (basic and acidic residues). Acidic residues predominate over residues 168-178 (NENENENENEN). The segment covering 179–191 (ENEKENQELDKKV) has biased composition (basic and acidic residues).

This is an uncharacterized protein from Dictyostelium discoideum (Social amoeba).